We begin with the raw amino-acid sequence, 204 residues long: Imidazoleglycerol-phosphate dehydratase (204 aa).

This sequence belongs to the imidazoleglycerol-phosphate dehydratase family.

It localises to the cytoplasm. It catalyses the reaction D-erythro-1-(imidazol-4-yl)glycerol 3-phosphate = 3-(imidazol-4-yl)-2-oxopropyl phosphate + H2O. It participates in amino-acid biosynthesis; L-histidine biosynthesis; L-histidine from 5-phospho-alpha-D-ribose 1-diphosphate: step 6/9. The chain is Imidazoleglycerol-phosphate dehydratase from Rhodococcus jostii (strain RHA1).